Here is a 676-residue protein sequence, read N- to C-terminus: MGRFNVKFMIKDIEDEILCLRDNIRKWNKEYYVDSSPSVSDLTYDKALLRLQDLESKYPEYKTLDSPTLKFGSDLLNNFEEVTHSFPILSLDKAYDIKELLLWIEKMVLEGSSLGSYTGISVEPKIDGCSIVLYYKDGILQKALTRGDGRVGNDVTENVRTIKNVPLSIDEKVELVLRGEIYITKENFLKINHTLKNPYLNARNLASGILRRINSREVASFPLDIFVYDILYSSFGLSTNHDAFDKLKKFGFKINPFCKFFGGKNLEEITNHVKKIEMQRNSLEYEIDGVVLKVDSFILRDILGYTSHHPKWSVAYKFESCTGVSKIVDIVVQVGRSGKITPVAHVEKVFVAGAFITNASLHNQDYIDSIGLNVGDVVAISRRGDVIPAVELVVEKLSIGSFKISSNCPSCKMALIKEGSHLFCVNKHCPYRIIEQIKYFCSKKCMNIVGLSGKTIEFLFEMKFISSEIELYTFNFDRLINLRGFDLKRIDNLKRSISDSKGRPFRKLLLGMGIKELGANTILVLINNNLNSFDIISTLCKNKEAALAKLLKIKGIGEKIALNIIEAFNDKIILDKFNFFKELGFKLEEYNTNYVVDDSFLFGKKFCITGSFEGHSRDVLIEKITKKGAIFNRAVTKRLDFLLVGEKPGLKLQKANNLGIKTFGLFDIKDFVDLDN.

NAD(+) contacts are provided by residues Asp41–Asp45, Ser90–Leu91, and Glu123. The active-site N6-AMP-lysine intermediate is the Lys125. The NAD(+) site is built by Arg146, Glu180, Lys293, and Lys317. Positions 408, 411, 424, and 429 each coordinate Zn(2+).

Belongs to the NAD-dependent DNA ligase family. LigA subfamily. Mg(2+) is required as a cofactor. Mn(2+) serves as cofactor.

It catalyses the reaction NAD(+) + (deoxyribonucleotide)n-3'-hydroxyl + 5'-phospho-(deoxyribonucleotide)m = (deoxyribonucleotide)n+m + AMP + beta-nicotinamide D-nucleotide.. Functionally, DNA ligase that catalyzes the formation of phosphodiester linkages between 5'-phosphoryl and 3'-hydroxyl groups in double-stranded DNA using NAD as a coenzyme and as the energy source for the reaction. It is essential for DNA replication and repair of damaged DNA. The sequence is that of DNA ligase from Borrelia turicatae (strain 91E135).